Consider the following 448-residue polypeptide: uncharacterized protein (448 aa).

Over 1–50 (MAPEIFVKFKCASRDIKLLWASVFLRLLSYGLTNQVLTLFLNAINMTEDK) the chain is Extracellular. The chain crosses the membrane as a helical span at residues 51–71 (IGLFMSLTLAGDVICSYILTW). Topologically, residues 72-93 (YADSWGRRRVLVYGCAMMLLSG) are cytoplasmic. A helical transmembrane segment spans residues 94 to 114 (LVFSFSENFTLLLVFAIFGVI). Over 115–146 (SPSSDEVGPFKSIEEAMIAHLSPHNARPEIYA) the chain is Extracellular. The chain crosses the membrane as a helical span at residues 147–167 (IHALVGTIGSALGAIICGIFV). The Cytoplasmic portion of the chain corresponds to 168–184 (DLLKRTGLAATDLQCYK). A helical membrane pass occupies residues 185 to 205 (LVFLLYAFFAFCKMVIMLLLS). Residues 206 to 260 (DATELDGHYEHTDCNEETAEPLDVNDETAPLMRQATHPEERSNKLSKETVSVLMK) are Extracellular-facing. The chain crosses the membrane as a helical span at residues 261-281 (LLVIFMVDSLGSGFMTSGWMV). Residues 282 to 287 (YYYSKQ) are Cytoplasmic-facing. The helical transmembrane segment at 288–308 (FLMGSLALGTLFFITQLVMAS) threads the bilayer. At 309–333 (STIPSSIIARCFGPVRATLLVQIPS) the chain is on the extracellular side. Residues 334 to 354 (GIFSILIPMAKNYLPLSILFL) form a helical membrane-spanning segment. The Cytoplasmic portion of the chain corresponds to 355 to 386 (NLHFATTAMDVTPRQILLTNIIKPRDLTKVMG). 386-393 (GVVNIGKT) lines the ATP pocket. A helical membrane pass occupies residues 387–407 (VVNIGKTFARCVGPIFTGILA). Over 408-416 (NNNYLWLCY) the chain is Extracellular. Residues 417–437 (IISGSLVITADLILACMFLGV) traverse the membrane as a helical segment. The Cytoplasmic segment spans residues 438 to 448 (DAKIKKQMNRH).

The protein localises to the membrane. This is an uncharacterized protein from Saccharomyces cerevisiae (strain ATCC 204508 / S288c) (Baker's yeast).